The sequence spans 349 residues: Dihydroorotate dehydrogenase (quinone) (349 aa).

FMN-binding positions include 65–69 (AGFDK) and alanine 89. Residue lysine 69 coordinates substrate. 114–118 (NRMGF) provides a ligand contact to substrate. Residues asparagine 143 and asparagine 176 each contribute to the FMN site. Asparagine 176 contacts substrate. The active-site Nucleophile is the serine 179. Asparagine 181 lines the substrate pocket. Lysine 212 and threonine 240 together coordinate FMN. Residue 241–242 (NT) participates in substrate binding. Positions 244–265 (TERPESLSHPHAGEQGGLSGAP) are disordered. A compositionally biased stretch (basic and acidic residues) spans 245-255 (ERPESLSHPHA). FMN contacts are provided by residues glycine 263, glycine 290, and 311-312 (YT).

This sequence belongs to the dihydroorotate dehydrogenase family. Type 2 subfamily. As to quaternary structure, monomer. Requires FMN as cofactor.

Its subcellular location is the cell membrane. It carries out the reaction (S)-dihydroorotate + a quinone = orotate + a quinol. It participates in pyrimidine metabolism; UMP biosynthesis via de novo pathway; orotate from (S)-dihydroorotate (quinone route): step 1/1. In terms of biological role, catalyzes the conversion of dihydroorotate to orotate with quinone as electron acceptor. The sequence is that of Dihydroorotate dehydrogenase (quinone) from Halobacterium salinarum (strain ATCC 29341 / DSM 671 / R1).